A 223-amino-acid chain; its full sequence is Kinetochore protein Spc25 (223 aa).

The stretch at 51-119 (RHQRKVGKLQ…NEIMERIQTL (69 aa)) forms a coiled coil.

It belongs to the SPC25 family. Component of the Ndc80 complex, which is composed of Ndc80, Nuf2 and Spc25.

The protein localises to the nucleus. It is found in the chromosome. Its subcellular location is the centromere. The protein resides in the kinetochore. Functionally, acts as a component of the essential kinetochore-associated Ndc80 complex, which is required for chromosome segregation and spindle checkpoint activity during meiosis and mitosis. Required for kinetochore integrity and the organization of stable microtubule binding sites in the outer plate of the kinetochore. Participates in SAC signaling that responds specifically to disruptions in spindle microtubule dynamics. The NDC80 complex synergistically enhances the affinity of the SKA1 complex for microtubules and may allow the NDC80 complex to track depolymerizing microtubules. This is Kinetochore protein Spc25 from Drosophila teissieri (Fruit fly).